The primary structure comprises 193 residues: uncharacterized protein (193 aa).

Disordered stretches follow at residues 1-67 (MSGP…GPRS) and 110-160 (QRTP…LPGS). Low complexity-rich tracts occupy residues 50-64 (GPQRGPRNAAAARPG) and 148-160 (AGASPGSRLLPGS).

This is an uncharacterized protein from Homo sapiens (Human).